The chain runs to 522 residues: Na(+)/H(+) antiporter NhaB (522 aa).

9 consecutive transmembrane segments (helical) span residues 13–33 (FLGNSPDWYKLAIMGFLIINP), 98–118 (LLLVFMVAGIYFMKQLLLFVF), 140–160 (AFLSAFLDALTVIAVVISVSV), 239–259 (FFIRMLPVTLPVFIFGLLVCL), 304–324 (AIIGVWLVLALHLAEVGLVGL), 356–376 (LTVFFAVVAVIIEQSLFTPII), 390–410 (LFYLFNGLLSSVSDNVFVGTV), 446–466 (ATPNGQAAFLFLLTSALAPLI), and 477–497 (ALPYTLVMTIVGLLGVEFLLV).

Belongs to the NhaB Na(+)/H(+) (TC 2.A.34) antiporter family.

The protein resides in the cell inner membrane. The enzyme catalyses 2 Na(+)(in) + 3 H(+)(out) = 2 Na(+)(out) + 3 H(+)(in). Na(+)/H(+) antiporter that extrudes sodium in exchange for external protons. The polypeptide is Na(+)/H(+) antiporter NhaB (Yersinia pestis bv. Antiqua (strain Angola)).